We begin with the raw amino-acid sequence, 2615 residues long: Collagen alpha-5(VI) chain (2615 aa).

The first 18 residues, 1 to 18, serve as a signal peptide directing secretion; that stretch reads MKILLIIFVLIIWTETLA. A nonhelical region region spans residues 19 to 1394; sequence DQSPGPGPVY…TCCCTFCKCP (1376 aa). 7 consecutive VWFA domains span residues 30 to 209, 236 to 413, 442 to 612, 628 to 797, 814 to 987, 1005 to 1178, and 1194 to 1376; these read DVVF…IKDV, DLVF…LKKL, DIHF…KNEV, DIMF…ERKL, DVVF…FTLV, DVIF…KKRI, and DIVV…KLSQ. N-linked (GlcNAc...) asparagine glycans are attached at residues asparagine 201 and asparagine 260. N-linked (GlcNAc...) asparagine glycosylation is present at asparagine 835. Collagen-like domains follow at residues 1395–1446, 1434–1490, 1464–1520, 1524–1580, 1579–1629, and 1674–1729; these read GIPG…GCPG, GPQG…KGDP, GDDG…PGQN, KGQK…TLGA, GAEG…LGKK, and GDAG…MAGQ. The tract at residues 1395–1728 is triple-helical region; that stretch reads GIPGPHGTRG…GQRGIKGMAG (334 aa). The segment at 1404–1693 is disordered; sequence GLQAMKGSQG…NPGIPGGPGP (290 aa). The short motif at 1430-1432 is the Cell attachment site element; that stretch reads RGD. Positions 1511-1522 are enriched in low complexity; that stretch reads PGDPGNPGQNNN. Composition is skewed to low complexity over residues 1601–1611 and 1622–1641; these read SQGQKGPQGSP and RPGL…LGPV. The tract at residues 1729–2615 is nonhelical region; sequence QPVYSQCDLI…EDKEMEATDI (887 aa). 3 VWFA domains span residues 1758-1965, 1963-2154, and 2291-2487; these read ELVF…MDVV, DVVF…AKFL, and DVAF…VKPF. A glycan (N-linked (GlcNAc...) asparagine) is linked at asparagine 2509.

It belongs to the type VI collagen family. Trimers composed of three different chains: alpha-1(VI), alpha-2(VI), and alpha-3(VI) or alpha-5(VI) or alpha-6(VI). Post-translationally, prolines at the third position of the tripeptide repeating unit (G-X-Y) are hydroxylated in some or all of the chains. Expressed in skin, followed by lung, small intestine, colon and testis. In skin, it is expressed in the epidermis with strongest staining in suprabasal viable layers. In ATOD patients, it is absent in the most differentiated upper spinous and granular layers (at protein level).

Its subcellular location is the secreted. The protein localises to the extracellular space. It localises to the extracellular matrix. Functionally, collagen VI acts as a cell-binding protein. This chain is Collagen alpha-5(VI) chain (COL6A5), found in Homo sapiens (Human).